Here is a 149-residue protein sequence, read N- to C-terminus: uncharacterized protein (149 aa).

A coiled-coil region spans residues 111–140 (HKALEKATELIENEEELLKREGIKRENLKF).

This is an uncharacterized protein from Aquifex aeolicus (strain VF5).